The primary structure comprises 444 residues: Putative zinc metalloprotease XF_1047 (444 aa).

Histidine 22 is a Zn(2+) binding site. The active site involves glutamate 23. Histidine 26 serves as a coordination point for Zn(2+). The helical transmembrane segment at 98–120 (IAIVAAGPLANLLLCMLLLWVLF) threads the bilayer. The PDZ domain occupies 192-276 (TLELSKLKQP…DGHPGMIEIR (85 aa)). A run of 2 helical transmembrane segments spans residues 371-393 (VGWF…LFPI) and 418-440 (AMAA…AFYN).

Belongs to the peptidase M50B family. The cofactor is Zn(2+).

The protein resides in the cell inner membrane. This chain is Putative zinc metalloprotease XF_1047, found in Xylella fastidiosa (strain 9a5c).